We begin with the raw amino-acid sequence, 674 residues long: Regulator of G-protein signaling 9 (674 aa).

Residues 30-105 enclose the DEP domain; that stretch reads PETGVRMQNQ…PDGSLYRFQT (76 aa). The 62-residue stretch at 219-280 folds into the G protein gamma domain; it reads KQTVVAVKKE…NPWITDDTQF (62 aa). The RGS domain occupies 298–413; the sequence is RWAFNFSELI…YARYLKSPIY (116 aa). The interval 533-573 is disordered; the sequence is SSGLEQKGECSGSMAPRGPSVTESSEASLDTSWPRSRPRAP. The span at 553 to 565 shows a compositional bias: polar residues; that stretch reads VTESSEASLDTSW.

Heterodimer with GNB5. Interacts with RGS7BP, leading to regulate the subcellular location of the heterodimer formed with GNB5. Component of the RGS9-1-Gbeta5 complex composed of RGS9 (RGS9-1), Gbeta5 (GNB5) and RGS9BP. Interacts with PDE6G and GNAT1. Retinal isoform 3 is light-dependent phosphorylated at 'Ser-478'. Phosphorylation is decreased by light exposition. In terms of tissue distribution, highly expressed in the caudate and putamen, lower levels found in the hypothalamus and nucleus accumbens and very low levels in cerebellum. Not expressed in globus pallidus or cingulate cortex. Isoform 2 is expressed predominantly in pineal gland and retina. Isoform 3 is expressed in retina (abundant in photoreceptors).

It localises to the membrane. Inhibits signal transduction by increasing the GTPase activity of G protein alpha subunits thereby driving them into their inactive GDP-bound form. Binds to GNAT1. Involved in phototransduction; key element in the recovery phase of visual transduction. In Homo sapiens (Human), this protein is Regulator of G-protein signaling 9 (RGS9).